The primary structure comprises 673 residues: MKAIVFAYHDIGCVGLEALALAGYEIQAVFTHSDAPGENHFYASVAKTAAGMDVPVFAPEDINHPLWVNRIRELAPDVIFSFYYRTILSDDILQLPSFGAFNLHGSLLPRYRGRAPVNWVLVNGETQTGVTLHKMVSRADAGDIVAQSVVAIDDEDTALTLHGKCRTAAATLLAQQLPLIRSREIALTPQDDSQASYFGRRTAADGLIDWQKSAHEINNLIRAVTEPYPGAFTFLGERKVIIWRARVVKNNRVNVNHPHGGDAGSIISTSPLVVSCGEDALEIVSGQSEAGLYMSGSRLAAEMGMVPQARLGNLASRVQRRRTRVLILGVNGFIGNHLTERLLRDDRYEIYGLDISSDAIARFLGDPRFHFVEGDISIHNEWIEYHIKKCDVILPLVAIATPIEYTRNPLRVFELDFEENLKIVRDCVRYNKRIVFPSTSEVYGMCDDKEFDEDTSRLIVGPINKQRWIYSVSKQLLDRVIWAYGAKNGLRFTLFRPFNWMGPRLDTLDAARIGSSRAITQLILNLVEGSPIKLVDGGAQKRCFTDIHDGIEALFRVIENRNGQCDGQIINIGNPHNEASIRELGEMLLTSFNAHPLRDRFPPFAGFIDVESSSYYGKGYQDVAHRTPSIRNAKRLLEWEPTVKMEQTVAETLDYFLRTVDVPHTADATDTQG.

The interval 1–311 (MKAIVFAYHD…EMGMVPQARL (311 aa)) is formyltransferase ArnAFT. Catalysis depends on His-104, which acts as the Proton donor; for formyltransferase activity. Residues Arg-114 and 136–140 (VSRAD) contribute to the (6R)-10-formyltetrahydrofolate site. Residues 321–673 (RRTRVLILGV…HTADATDTQG (353 aa)) are dehydrogenase ArnADH. Residues Asp-354 and 375-376 (DI) each bind NAD(+). Residues Ala-400, Tyr-405, and 439-440 (TS) contribute to the UDP-alpha-D-glucuronate site. Residue Glu-441 is the Proton acceptor; for decarboxylase activity of the active site. UDP-alpha-D-glucuronate is bound by residues Arg-467, Asn-499, 533 to 542 (KLVDGGAQKR), and Tyr-620. Arg-626 functions as the Proton donor; for decarboxylase activity in the catalytic mechanism.

In the N-terminal section; belongs to the Fmt family. UDP-L-Ara4N formyltransferase subfamily. The protein in the C-terminal section; belongs to the NAD(P)-dependent epimerase/dehydratase family. UDP-glucuronic acid decarboxylase subfamily. As to quaternary structure, homohexamer, formed by a dimer of trimers.

The catalysed reaction is UDP-alpha-D-glucuronate + NAD(+) = UDP-beta-L-threo-pentopyranos-4-ulose + CO2 + NADH. It carries out the reaction UDP-4-amino-4-deoxy-beta-L-arabinose + (6R)-10-formyltetrahydrofolate = UDP-4-deoxy-4-formamido-beta-L-arabinose + (6S)-5,6,7,8-tetrahydrofolate + H(+). The protein operates within nucleotide-sugar biosynthesis; UDP-4-deoxy-4-formamido-beta-L-arabinose biosynthesis; UDP-4-deoxy-4-formamido-beta-L-arabinose from UDP-alpha-D-glucuronate: step 1/3. Its pathway is nucleotide-sugar biosynthesis; UDP-4-deoxy-4-formamido-beta-L-arabinose biosynthesis; UDP-4-deoxy-4-formamido-beta-L-arabinose from UDP-alpha-D-glucuronate: step 3/3. It functions in the pathway bacterial outer membrane biogenesis; lipopolysaccharide biosynthesis. In terms of biological role, bifunctional enzyme that catalyzes the oxidative decarboxylation of UDP-glucuronic acid (UDP-GlcUA) to UDP-4-keto-arabinose (UDP-Ara4O) and the addition of a formyl group to UDP-4-amino-4-deoxy-L-arabinose (UDP-L-Ara4N) to form UDP-L-4-formamido-arabinose (UDP-L-Ara4FN). The modified arabinose is attached to lipid A and is required for resistance to polymyxin and cationic antimicrobial peptides. This chain is Bifunctional polymyxin resistance protein ArnA, found in Pectobacterium atrosepticum (strain SCRI 1043 / ATCC BAA-672) (Erwinia carotovora subsp. atroseptica).